The primary structure comprises 292 residues: Selenate reductase subunit B (292 aa).

A signal peptide (tat-type signal) is located at residues 1-43 (MGSKETKNTSRRDFLIKGAGAAALGAGAFAISQVPLLEKLASA). 3 consecutive 4Fe-4S ferredoxin-type domains span residues 84–113 (WIMVIDLKKCVGCSSCTVACVSENVLPPGV), 129–160 (VTKKFTPRPCMQCEHPPCTKVCPIGATYKSED), and 161–190 (GIVAIDYDKCIGCRYCITACPYGARTFDWG). [4Fe-4S] cluster-binding residues include Cys-93, Cys-96, Cys-99, Cys-103, Cys-138, Cys-141, Cys-146, Cys-150, Cys-170, Cys-173, Cys-176, Cys-180, Cys-230, Cys-233, Cys-245, and Cys-249.

The complex is composed of three subunits: SrdA, SrdB and SrdC. It depends on [4Fe-4S] cluster as a cofactor. Post-translationally, predicted to be exported by the Tat system. The position of the signal peptide cleavage has not been experimentally proven.

The protein localises to the secreted. It carries out the reaction selenite + a quinone + H2O = selenate + a quinol. Its function is as follows. Component of the respiratory selenate reductase complex, which catalyzes the reduction of selenate to selenite. This subunit probably transfers electrons from SrdC to SrdA. The chain is Selenate reductase subunit B from Mesobacillus selenatarsenatis (strain DSM 18680 / JCM 14380 / FERM P-15431 / SF-1).